The following is a 38-amino-acid chain: Large ribosomal subunit protein bL36 (38 aa).

The protein belongs to the bacterial ribosomal protein bL36 family.

The protein is Large ribosomal subunit protein bL36 of Phytoplasma australiense.